Here is a 157-residue protein sequence, read N- to C-terminus: Transcriptional repressor NrdR (157 aa).

The interval 1 to 21 (MRCPYCSSEDSQVKDSRPAED) is disordered. Residues 3–34 (CPYCSSEDSQVKDSRPAEDGNAIRRRRICPDC) fold into a zinc finger. The span at 11–21 (SQVKDSRPAED) shows a compositional bias: basic and acidic residues. The ATP-cone domain occupies 49–139 (LMIIKKTGRK…VYRDFSHAED (91 aa)).

The protein belongs to the NrdR family. Zn(2+) serves as cofactor.

In terms of biological role, negatively regulates transcription of bacterial ribonucleotide reductase nrd genes and operons by binding to NrdR-boxes. This chain is Transcriptional repressor NrdR, found in Sinorhizobium fredii (strain NBRC 101917 / NGR234).